Here is a 585-residue protein sequence, read N- to C-terminus: 3-hydroxy-3-methylglutaryl-coenzyme A reductase 1 (585 aa).

A run of 2 helical transmembrane segments spans residues leucine 38 to cysteine 58 and glutamate 77 to isoleucine 97. The tract at residues aspartate 98–glutamate 169 is linker. The tract at residues glutamate 170–serine 585 is catalytic. Catalysis depends on glutamate 264, which acts as the Charge relay system. The N-linked (GlcNAc...) asparagine glycan is linked to asparagine 328. Lysine 396 functions as the Charge relay system in the catalytic mechanism. N-linked (GlcNAc...) asparagine glycosylation is present at asparagine 441. Catalysis depends on aspartate 472, which acts as the Charge relay system. Histidine 570 functions as the Proton donor in the catalytic mechanism. Residue asparagine 574 is glycosylated (N-linked (GlcNAc...) asparagine).

The protein belongs to the HMG-CoA reductase family.

The protein localises to the endoplasmic reticulum membrane. Its subcellular location is the mitochondrion membrane. The protein resides in the plastid membrane. The catalysed reaction is (R)-mevalonate + 2 NADP(+) + CoA = (3S)-3-hydroxy-3-methylglutaryl-CoA + 2 NADPH + 2 H(+). Its pathway is metabolic intermediate biosynthesis; (R)-mevalonate biosynthesis; (R)-mevalonate from acetyl-CoA: step 3/3. In terms of biological role, catalyzes the synthesis of mevalonate. The specific precursor of all isoprenoid compounds present in plants. The chain is 3-hydroxy-3-methylglutaryl-coenzyme A reductase 1 (HMG1) from Gossypium hirsutum (Upland cotton).